The following is a 283-amino-acid chain: uncharacterized protein (283 aa).

4 helical membrane-spanning segments follow: residues 11–31, 35–55, 56–76, and 93–113; these read LFAYFSGLIAALSLFIYYVSA, EGALILCITFGVIAAGIWFGP, IYALAVTLIVLFVLGTLMMFF, and LVVWGIALLLFSFISGRIHDI. The GGDEF domain maps to 162-283; it reads NSFVFLLLHM…LENEMMMNEL (122 aa).

It localises to the cell membrane. This is an uncharacterized protein from Bacillus subtilis (strain 168).